The primary structure comprises 577 residues: Arginine--tRNA ligase (577 aa).

The short motif at 122–132 (PNVAKEMHVGH) is the 'HIGH' region element.

Belongs to the class-I aminoacyl-tRNA synthetase family. In terms of assembly, monomer.

The protein localises to the cytoplasm. It carries out the reaction tRNA(Arg) + L-arginine + ATP = L-arginyl-tRNA(Arg) + AMP + diphosphate. This is Arginine--tRNA ligase from Salmonella choleraesuis (strain SC-B67).